We begin with the raw amino-acid sequence, 580 residues long: Netrin-3 (580 aa).

Positions 1-27 (MPGWPWGLLLTAGTLFAALSPGPPAPA) are cleaved as a signal peptide. The 219-residue stretch at 36-254 (APRGCVPGLV…AATDLQVGGR (219 aa)) folds into the Laminin N-terminal domain. Residues 62–83 (PATRACDASDPRRAHSPALLTS) form a disordered region. 15 disulfide bridges follow: C92-C125, C255-C264, C257-C274, C276-C285, C288-C308, C311-C320, C313-C338, C341-C350, C353-C371, C374-C386, C376-C393, C395-C404, C407-C421, C441-C514, and C460-C577. N104 carries N-linked (GlcNAc...) asparagine glycosylation. 3 Laminin EGF-like domains span residues 255 to 308 (CKCN…SHAC), 311 to 371 (CSCN…RRAC), and 374 to 421 (CDCH…VAPC). An N-linked (GlcNAc...) asparagine glycan is attached at N387. Residues 441-577 (CDSHCKPARG…LQRRERRGRC (137 aa)) form the NTR domain. The Cell attachment site; atypical motif lies at 500–502 (RGS).

In terms of tissue distribution, spinal cord.

Its subcellular location is the secreted. The protein localises to the extracellular space. The protein resides in the extracellular matrix. Its function is as follows. Netrins control guidance of CNS commissural axons and peripheral motor axons. The chain is Netrin-3 (NTN3) from Homo sapiens (Human).